We begin with the raw amino-acid sequence, 548 residues long: MPQSWEELAADKRARLAKTIPDEWKVQTLPAEDSVIDFPKKSGILSEAELKITEASAADLVSKLAAGELTSVEVTLAFCKRAAIAQQLTNCAHEFFPDAALAQARELDEYYAKHKRPVGPLHGLPISLKDQLRVKGYETSMGYISWLNKYDEGDSVLTTMLRKAGAVFYVKTSVPQTLMVCETVNNIIGRTVNPRNKNWSCGGSSGGEGAIVGIRGGVIGVGTDIGGSIRVPAAFNFLYGLRPSHGRLPYAKMANSMEGQETVHSVVGPITHSVEDLRLFTKSVLGQEPWKYDSKVIPMPWRQSESDIIASKIKNGGLNIGYYNFDGNVLPHPPILRGVETTVAALAKAGHTVTPWTPYKHDFGHDLISHIYAADGSADVMRDISASGEPAIPNIKDLLNPNIKAVNMNELWDTHLQKWNYQMEYLEKWREAEEKAGKELDAIIAPITPTAAVRHDQFRYYGYASVINLLDFTSVVVPVTFADKNIDKKNESFKAVSELDALVQEEYDPEAYHGAPVAVQVIGRRLSEERTLAIAEEVGKLLGNVVTP.

Catalysis depends on charge relay system residues K129 and S204. S228 functions as the Acyl-ester intermediate in the catalytic mechanism.

This sequence belongs to the amidase family.

It catalyses the reaction a monocarboxylic acid amide + H2O = a monocarboxylate + NH4(+). The enzyme catalyses acetamide + H2O = acetate + NH4(+). In terms of biological role, allows acetamide to be used as a sole carbon or nitrogen source. The chain is Acetamidase (amdS) from Emericella nidulans (strain FGSC A4 / ATCC 38163 / CBS 112.46 / NRRL 194 / M139) (Aspergillus nidulans).